The primary structure comprises 528 residues: MLGLVGRVVAASASGALRGLSPSAPLPQAQLLLRAAPAALQPARDYAAQASPSPKAGATTGRIVAVIGAVVDVQFDEGLPPILNALEVQGRETRLVLEVAQHLGESTVRTIAMDGTEGLVRGQKVLDSGAPIRIPVGPETLGRIMNVIGEPIDERGPIKTKQFAAIHAEAPEFVEMSVEQEILVTGIKVVDLLAPYAKGGKIGLFGGAGVGKTVLIMELINNVAKAHGGYSVFAGVGERTREGNDLYHEMIESGVINLKDATSKVALVYGQMNEPPGARARVALTGLTVAEYFRDQEGQDVLLFIDNIFRFTQAGSEVSALLGRIPSAVGYQPTLATDMGTMQERITTTKKGSITSVQAIYVPADDLTDPAPATTFAHLDATTVLSRAIAELGIYPAVDPLDSTSRIMDPNIVGSEHYDVARGVQKILQDYKSLQDIIAILGMDELSEEDKLTVSRARKIQRFLSQPFQVAEVFTGHLGKLVPLKETIKGFQQILAGEYDHLPEQAFYMVGPIEEAVAKADKLAEEHS.

A mitochondrion-targeting transit peptide spans 1-46 (MLGLVGRVVAASASGALRGLSPSAPLPQAQLLLRAAPAALQPARDY). The O-linked (GlcNAc) serine glycan is linked to Ser-106. An N6-acetyllysine; alternate mark is found at Lys-124 and Lys-161. N6-succinyllysine; alternate occurs at positions 124 and 161. Lys-198 carries the N6-acetyllysine modification. ADP-binding residues include Gly-209, Val-210, Gly-211, Lys-212, Thr-213, and Val-214. Residue Gly-209 participates in ATP binding. Phosphate-binding residues include Gly-209, Val-210, Gly-211, Lys-212, and Thr-213. ATP contacts are provided by Gly-211, Lys-212, Thr-213, and Val-214. Position 213 (Thr-213) interacts with Mg(2+). A Mg(2+)-binding site is contributed by Glu-238. Arg-239 contributes to the ATP binding site. Lys-259 and Lys-264 each carry N6-acetyllysine; alternate. 2 positions are modified to N6-succinyllysine; alternate: Lys-259 and Lys-264. At Thr-312 the chain carries Phosphothreonine. Ser-415 bears the Phosphoserine mark. An N6-acetyllysine modification is found at Lys-426. Ser-433 carries the phosphoserine modification. N6-acetyllysine occurs at positions 480 and 485. Lys-522 is subject to N6-acetyllysine; alternate. At Lys-522 the chain carries N6-succinyllysine; alternate.

This sequence belongs to the ATPase alpha/beta chains family. Homotrimer. Component of the ATP synthase complex composed at least of ATP5F1A/subunit alpha, ATP5F1B/subunit beta, ATP5MC1/subunit c (homooctomer), MT-ATP6/subunit a, MT-ATP8/subunit 8, ATP5ME/subunit e, ATP5MF/subunit f, ATP5MG/subunit g, ATP5MK/subunit k, ATP5MJ/subunit j, ATP5F1C/subunit gamma, ATP5F1D/subunit delta, ATP5F1E/subunit epsilon, ATP5PF/subunit F6, ATP5PB/subunit b, ATP5PD/subunit d, ATP5PO/subunit OSCP. ATP synthase complex consists of a soluble F(1) head domain (subunits alpha(3) and beta(3)) - the catalytic core - and a membrane F(0) domain - the membrane proton channel (subunits c, a, 8, e, f, g, k and j). These two domains are linked by a central stalk (subunits gamma, delta, and epsilon) rotating inside the F1 region and a stationary peripheral stalk (subunits F6, b, d, and OSCP). Interacts with PPIF. Interacts with BCL2L1 isoform BCL-X(L); the interaction mediates the association of BCL2L1 isoform BCL-X(L) with the mitochondrial membrane F(1)F(0) ATP synthase and enhances neurons metabolic efficiency. Interacts with CLN5 and PPT1. Interacts with S100A1; this interaction increases F1-ATPase activity. Interacts with MTLN. Interacts with TTC5/STRAP; the interaction results in decreased mitochondrial ATP production.

The protein resides in the mitochondrion inner membrane. The catalysed reaction is ATP + H2O + 4 H(+)(in) = ADP + phosphate + 5 H(+)(out). Catalytic subunit beta, of the mitochondrial membrane ATP synthase complex (F(1)F(0) ATP synthase or Complex V) that produces ATP from ADP in the presence of a proton gradient across the membrane which is generated by electron transport complexes of the respiratory chain. ATP synthase complex consist of a soluble F(1) head domain - the catalytic core - and a membrane F(1) domain - the membrane proton channel. These two domains are linked by a central stalk rotating inside the F(1) region and a stationary peripheral stalk. During catalysis, ATP synthesis in the catalytic domain of F(1) is coupled via a rotary mechanism of the central stalk subunits to proton translocation. In vivo, can only synthesize ATP although its ATP hydrolase activity can be activated artificially in vitro. With the subunit alpha (ATP5F1A), forms the catalytic core in the F(1) domain. The protein is ATP synthase F(1) complex catalytic subunit beta, mitochondrial of Bos taurus (Bovine).